Here is a 101-residue protein sequence, read N- to C-terminus: Small ribosomal subunit protein uS14 (101 aa).

It belongs to the universal ribosomal protein uS14 family. Part of the 30S ribosomal subunit. Contacts proteins S3 and S10.

In terms of biological role, binds 16S rRNA, required for the assembly of 30S particles and may also be responsible for determining the conformation of the 16S rRNA at the A site. The polypeptide is Small ribosomal subunit protein uS14 (Dinoroseobacter shibae (strain DSM 16493 / NCIMB 14021 / DFL 12)).